A 46-amino-acid polypeptide reads, in one-letter code: Large ribosomal subunit protein bL34 (46 aa).

Belongs to the bacterial ribosomal protein bL34 family.

The chain is Large ribosomal subunit protein bL34 from Synechococcus sp. (strain JA-2-3B'a(2-13)) (Cyanobacteria bacterium Yellowstone B-Prime).